Consider the following 121-residue polypeptide: Flagellar protein FliT (121 aa).

A required for homodimerization region spans residues 1–50 (MNNAPHLYFAWQQLVEKSQLMLRLATEEQWDELIASEMAYVNAVQEIAHL). Residues 60 to 98 (MQEQLRPMLHLILDNESKVKQLLQIRMDELAKLVGQSSV) form a fliD binding region.

It belongs to the FliT family. Homodimer. Interacts with FliD and FlhC.

It is found in the cytoplasm. Its subcellular location is the cytosol. Functionally, dual-function protein that regulates the transcription of class 2 flagellar operons and that also acts as an export chaperone for the filament-capping protein FliD. As a transcriptional regulator, acts as an anti-FlhDC factor; it directly binds FlhC, thus inhibiting the binding of the FlhC/FlhD complex to class 2 promoters, resulting in decreased expression of class 2 flagellar operons. As a chaperone, effects FliD transition to the membrane by preventing its premature polymerization, and by directing it to the export apparatus. The protein is Flagellar protein FliT of Escherichia coli O17:K52:H18 (strain UMN026 / ExPEC).